Here is a 209-residue protein sequence, read N- to C-terminus: Ribosomal RNA small subunit methyltransferase G (209 aa).

Residues Gly-71, Phe-76, 122-123, and Arg-135 contribute to the S-adenosyl-L-methionine site; that span reads AE.

This sequence belongs to the methyltransferase superfamily. RNA methyltransferase RsmG family.

It localises to the cytoplasm. Its function is as follows. Specifically methylates the N7 position of a guanine in 16S rRNA. This chain is Ribosomal RNA small subunit methyltransferase G, found in Flavobacterium psychrophilum (strain ATCC 49511 / DSM 21280 / CIP 103535 / JIP02/86).